The sequence spans 477 residues: Tripartite motif-containing protein 72 (477 aa).

Positions 14, 17, 29, 31, 34, 37, 53, 56, 86, 89, 97, 100, 105, 108, 114, and 117 each coordinate Zn(2+). The RING-type zinc finger occupies 14 to 57 (CPLCLQLFDAPVTAECGHSFCRACLGRVAGEPAADGTVLCPCCQ). Residues 81 to 122 (VPQGHCEEHLDPLSIYCEQDRALVCGVCASLGSHRGHRLLPA) form a B box-type zinc finger. Residues 135 to 232 (QQKLQLQEAC…EKVLEEVADK (98 aa)) are a coiled coil. Cys144 is subject to S-nitrosocysteine. Ser255 is subject to Phosphoserine. One can recognise a B30.2/SPRY domain in the interval 271–475 (DFKFQVWRKM…PLLLVGPEGA (205 aa)).

It belongs to the TRIM/RBCC family. As to quaternary structure, homodimer. Homooligomer; disulfide-linked. Oligomerizes on the phospholipid membrane. Interacts with DYSF and CAV3. Disulfide bond formation at Cys-242 occurs in case of membrane damage that cause the entry of the oxidized milieu of the extracellular space, resulting in homooligomerization. In terms of processing, S-nitrosylation at Cys-144 stabilizes TRIM72 and protects against oxidation-induced protein degradation and cell death.

The protein resides in the cell membrane. Its subcellular location is the sarcolemma. It is found in the cytoplasmic vesicle membrane. It catalyses the reaction S-ubiquitinyl-[E2 ubiquitin-conjugating enzyme]-L-cysteine + [acceptor protein]-L-lysine = [E2 ubiquitin-conjugating enzyme]-L-cysteine + N(6)-ubiquitinyl-[acceptor protein]-L-lysine.. The protein operates within protein modification; protein ubiquitination. With respect to regulation, specifically binds phosphatidylserine. The binding to phospholipids enhances ubiquitination activity. In terms of biological role, muscle-specific E3 ubiquitin-protein ligase that plays a central role in cell membrane repair by nucleating the assembly of the repair machinery at injury sites. Its ubiquitination activity is mediated by E2 ubiquitin-conjugating enzymes UBE2D1, UBE2D2 and UBE2D3. Acts as a sensor of oxidation: upon membrane damage, entry of extracellular oxidative environment results in disulfide bond formation and homooligomerization at the injury site. This oligomerization acts as a nucleation site for recruitment of TRIM72-containing vesicles to the injury site, leading to membrane patch formation. Probably acts upstream of the Ca(2+)-dependent membrane resealing process. Required for transport of DYSF to sites of cell injury during repair patch formation. Regulates membrane budding and exocytosis. May be involved in the regulation of the mobility of KCNB1-containing endocytic vesicles. The protein is Tripartite motif-containing protein 72 of Homo sapiens (Human).